The primary structure comprises 307 residues: Bifunctional protein FolD (307 aa).

NADP(+) contacts are provided by residues Gly-165 to Ser-167, Ser-190, and Ile-231.

Belongs to the tetrahydrofolate dehydrogenase/cyclohydrolase family. Homodimer.

It catalyses the reaction (6R)-5,10-methylene-5,6,7,8-tetrahydrofolate + NADP(+) = (6R)-5,10-methenyltetrahydrofolate + NADPH. The enzyme catalyses (6R)-5,10-methenyltetrahydrofolate + H2O = (6R)-10-formyltetrahydrofolate + H(+). It functions in the pathway one-carbon metabolism; tetrahydrofolate interconversion. In terms of biological role, catalyzes the oxidation of 5,10-methylenetetrahydrofolate to 5,10-methenyltetrahydrofolate and then the hydrolysis of 5,10-methenyltetrahydrofolate to 10-formyltetrahydrofolate. This Koribacter versatilis (strain Ellin345) protein is Bifunctional protein FolD.